Consider the following 312-residue polypeptide: Gamma-soluble NSF attachment protein (312 aa).

Residues 281–312 (KKKAAAPPQAKPEGTAAPAAEEEEDEYAGGLC) form a disordered region. Residues 285–299 (AAPPQAKPEGTAAPA) are compositionally biased toward low complexity. A compositionally biased stretch (acidic residues) spans 300-312 (AEEEEDEYAGGLC).

This sequence belongs to the SNAP family. As to quaternary structure, interacts with RAB11FIP5. Interacts with VTI1A.

The protein resides in the membrane. The protein localises to the golgi apparatus. Required for vesicular transport between the endoplasmic reticulum and the Golgi apparatus. This Bos taurus (Bovine) protein is Gamma-soluble NSF attachment protein.